An 856-amino-acid chain; its full sequence is Glucans biosynthesis glucosyltransferase H (856 aa).

A run of 6 helical transmembrane segments spans residues 144 to 164 (ILLVLMLGQTIVAGWYMKGIM), 198 to 218 (ILIMFGILFCWVSAGFWTALM), 517 to 537 (VFLTGVMSYLSAPLWFFFLVL), 574 to 594 (LFSTTIVLLFLPKLLSIILIW), 608 to 628 (TLSMLLEMLFSMLLAPVRMIF), and 691 to 711 (IVGSLMLSIPVSVISSRVGLG).

Belongs to the glycosyltransferase 2 family. OpgH subfamily.

The protein resides in the cell inner membrane. The protein operates within glycan metabolism; osmoregulated periplasmic glucan (OPG) biosynthesis. Functionally, involved in the biosynthesis of osmoregulated periplasmic glucans (OPGs). The protein is Glucans biosynthesis glucosyltransferase H of Pseudomonas fluorescens (strain Pf0-1).